Consider the following 146-residue polypeptide: Angiogenin (146 aa).

Residues 1-24 (MVMGLGLFLLVFMLGLGLTPPTLA) form the signal peptide. Gln25 is subject to Pyrrolidone carboxylic acid. The active-site Proton acceptor is the His37. Arg45 lines the tRNA pocket. Intrachain disulfides connect Cys50-Cys105, Cys63-Cys116, and Cys81-Cys131. The short motif at 55-59 (RRRHL) is the Nucleolar localization signal element. Residues Cys105 and Ile127 each contribute to the tRNA site. The Proton donor role is filled by His138.

The protein belongs to the pancreatic ribonuclease family. Homodimer. Interacts with RNH1; inhibiting ANG ribonuclease activity. Interacts with PCNA.

The protein localises to the secreted. Its subcellular location is the nucleus. The protein resides in the nucleolus. It localises to the cytoplasm. It is found in the stress granule. Its activity is regulated as follows. Has weak tRNA ribonuclease activity by itself due to partial autoinhibition by its C-terminus, which folds into a short alpha-helix that partially occludes the substrate-binding site. In absence of stress, the ribonuclease activity is inhibited by RNH1 in the cytoplasm. In response to stress, dissociates from RNH1 in the cytoplasm and associates with cytoplasmic ribosomes with vacant A-sites: ribosomes directly activate the tRNA ribonuclease activity of ANG by refolding the C-terminal alpha-helix. In response to stress, the angiogenic activity of ANG is inhibited by RNH1 in the nucleus. In terms of biological role, secreted ribonuclease that can either promote or restrict cell proliferation of target cells, depending on the context. Endocytosed in target cells via its receptor PLXNB2 and translocates to the cytoplasm or nucleus. Under stress conditions, localizes to the cytoplasm and promotes the assembly of stress granules (SGs): specifically cleaves a subset of tRNAs within anticodon loops to produce tRNA-derived stress-induced fragments (tiRNAs), resulting in translation repression and inhibition of cell proliferation. tiRNas also prevent formation of apoptosome, thereby promoting cell survival. Preferentially cleaves RNAs between a pyrimidine and an adenosine residue, suggesting that it cleaves the anticodon loop of tRNA(Ala) (32-UUAGCAU-38) after positions 33 and 36. Cleaves a subset of tRNAs, including tRNA(Ala), tRNA(Glu), tRNA(Gly), tRNA(Lys), tRNA(Val), tRNA(His), tRNA(Asp) and tRNA(Sec). Under growth conditions and in differentiated cells, translocates to the nucleus and stimulates ribosomal RNA (rRNA) transcription, including that containing the initiation site sequences of 45S rRNA, thereby promoting cell growth and proliferation. Angiogenin induces vascularization of normal and malignant tissues via its ability to promote rRNA transcription. Involved in hematopoietic stem and progenitor cell (HSPC) growth and survival by promoting rRNA transcription in growth conditions and inhibiting translation in response to stress, respectively. Mediates the crosstalk between myeloid and intestinal epithelial cells to protect the intestinal epithelial barrier integrity: secreted by myeloid cells and promotes intestinal epithelial cells proliferation and survival. Also mediates osteoclast-endothelial cell crosstalk in growing bone: produced by osteoclasts and protects the neighboring vascular cells against senescence by promoting rRNA transcription. The protein is Angiogenin (ANG) of Macaca mulatta (Rhesus macaque).